A 521-amino-acid polypeptide reads, in one-letter code: Glutamyl-tRNA(Gln) amidotransferase subunit A, mitochondrial (521 aa).

Catalysis depends on charge relay system residues Lys61 and Ser139. Residue Ser163 is the Acyl-ester intermediate of the active site.

It belongs to the amidase family. GatA subfamily. Subunit of the heterotrimeric GatCAB amidotransferase (AdT) complex, composed of A, B and C subunits.

The protein resides in the mitochondrion. The catalysed reaction is L-glutamyl-tRNA(Gln) + L-glutamine + ATP + H2O = L-glutaminyl-tRNA(Gln) + L-glutamate + ADP + phosphate + H(+). In terms of biological role, allows the formation of correctly charged Gln-tRNA(Gln) through the transamidation of misacylated Glu-tRNA(Gln) in the mitochondria. The reaction takes place in the presence of glutamine and ATP through an activated gamma-phospho-Glu-tRNA(Gln). The protein is Glutamyl-tRNA(Gln) amidotransferase subunit A, mitochondrial of Ajellomyces capsulatus (strain G186AR / H82 / ATCC MYA-2454 / RMSCC 2432) (Darling's disease fungus).